Reading from the N-terminus, the 575-residue chain is uncharacterized protein (575 aa).

The first 28 residues, 1-28 (MSNLLWKSLVVSPAVLGATLLVSSAAIA), serve as a signal peptide directing secretion. Residues 87–151 (SVSQFSDVQP…DRVNELIATA (65 aa)) enclose the SLH domain. A coiled-coil region spans residues 158-196 (KQDLATLQRLQEEFSAELATLRGRVDALEARTAELEANQ).

This sequence belongs to the OprB family.

This is an uncharacterized protein from Nostoc sp. (strain PCC 7120 / SAG 25.82 / UTEX 2576).